Reading from the N-terminus, the 112-residue chain is Integration host factor subunit alpha (112 aa).

This sequence belongs to the bacterial histone-like protein family. As to quaternary structure, heterodimer of an alpha and a beta chain.

In terms of biological role, this protein is one of the two subunits of integration host factor, a specific DNA-binding protein that functions in genetic recombination as well as in transcriptional and translational control. This Sinorhizobium fredii (strain NBRC 101917 / NGR234) protein is Integration host factor subunit alpha.